The primary structure comprises 301 residues: POU domain, class 6, transcription factor 1 (301 aa).

2 repeat units span residues 11-17 (NAQGQVI) and 50-56 (NAQGQVI). The segment at 11–56 (NAQGQVIGALPWVVNSASVATPAPAQSLQVQAVTPQLLLNAQGQVI) is 2 X 7 AA repeats of N-A-Q-G-Q-V-I. Positions 66 to 88 (QPVAVRKPSTPESPAKSEVQPIQ) are disordered. The POU-specific domain maps to 139–213 (EDGINLEEIR…VLEKWLNEAE (75 aa)). The segment at residues 234–293 (KRKRRTSFTPQAIEALNAYFEKNPLPTGQEITEIAKELNYDREVVRVWFCNRRQTLKNTS) is a DNA-binding region (homeobox).

Belongs to the POU transcription factor family. Class-6 subfamily. As to expression, in the embryo, widely expressed, with highest levels in the developing brain and spinal cord. In the adult, mostly found in the brain, where it is diffusely expressed with the exception of an enrichment in layer IV of the neocortex. Also found in kidney, lung, heart, adrenal, skin, and placenta. Low levels in spleen, muscle, liver, anterior pituitary, testis and ovary.

It is found in the nucleus. Transcription factor that binds preferentially to a variant of the octamer motif (5'-ATGATAAT-3'). This chain is POU domain, class 6, transcription factor 1 (Pou6f1), found in Rattus norvegicus (Rat).